Reading from the N-terminus, the 322-residue chain is Germ cell-specific gene 1-like protein (322 aa).

At 1-8 (MKTSRRGR) the chain is on the cytoplasmic side. A helical transmembrane segment spans residues 9–29 (ALLAVALNLLALLFATTAFLT). Over 30 to 122 (TYWCQGTQRV…FIDLAPASEK (93 aa)) the chain is Extracellular. Residues 123-143 (GVLWLSVVSEVLYILLLVVGF) traverse the membrane as a helical segment. Residues 144–163 (SLMCLELVHSSSVIDGLKLN) lie on the Cytoplasmic side of the membrane. The chain crosses the membrane as a helical span at residues 164–184 (AFAAVFTVLSGLLGMVAHMMY). Over 185–207 (TQVFQVTVSLGPEDWRPHSWDYG) the chain is Extracellular. A helical transmembrane segment spans residues 208-228 (WSFCLAWGSFTCCMAASVTTL). Residues 229-322 (NSYTKTVIEF…RQCWVLGHWV (94 aa)) lie on the Cytoplasmic side of the membrane. Phosphoserine is present on S274.

The protein belongs to the GSG1 family. Component of the inner core of AMPAR complexes. AMPAR complexes consist of an inner core made of 4 pore-forming GluA/GRIA proteins (GRIA1, GRIA2, GRIA3 and GRIA4) and 4 major auxiliary subunits arranged in a twofold symmetry. One of the two pairs of distinct binding sites is occupied either by CNIH2, CNIH3 or CACNG2, CACNG3. The other harbors CACNG2, CACNG3, CACNG4, CACNG8 or GSG1L. This inner core of AMPAR complexes is complemented by outer core constituents binding directly to the GluA/GRIA proteins at sites distinct from the interaction sites of the inner core constituents. Outer core constituents include at least PRRT1, PRRT2, CKAMP44/SHISA9, FRRS1L and NRN1. The proteins of the inner and outer core serve as a platform for other, more peripherally associated AMPAR constituents. Alone or in combination, these auxiliary subunits control the gating and pharmacology of the AMPAR complexes and profoundly impact their biogenesis and protein processing. As to expression, expressed in the brain, including hippocampus (at protein level).

Its subcellular location is the cell membrane. It is found in the synapse. As a component of the inner core of AMPAR complexes, modifies AMPA receptor (AMPAR) gating. In Mus musculus (Mouse), this protein is Germ cell-specific gene 1-like protein (Gsg1l).